A 579-amino-acid chain; its full sequence is Protein alan shepard (579 aa).

Residues 1–12 (MHPRYSPAPPPQ) show a composition bias toward pro residues. The tract at residues 1-66 (MHPRYSPAPP…GSSSSAAAAP (66 aa)) is disordered. Tyr-5 is subject to Phosphotyrosine. Residues 13–24 (QQQQMGGPPHQQ) show a composition bias toward low complexity. Residues 25 to 35 (QGGGGGGGGSM) are compositionally biased toward gly residues. The span at 37-54 (GPSNAQQLPPQIPRSQNY) shows a compositional bias: polar residues. Residues 55–66 (SNGSSSSAAAAP) are compositionally biased toward low complexity. Residues Tyr-125 and Tyr-142 each carry the phosphotyrosine modification. Residues 164-225 (PATTTYGQRV…TVQNQNQQGG (62 aa)) are disordered. A compositionally biased stretch (low complexity) spans 178–225 (SPSNTNSSSSSNTGSQSGTLSTSLSNTTNTNTNMGPNGTVQNQNQQGG). 2 RRM domains span residues 231–304 (TNLY…MAKQ) and 310–389 (TNLY…FADG). The interval 553–579 (MTDSEQASTAASPDEAYTQYPHQAAPK) is disordered.

Its function is as follows. Has a role in the perception of gravity. In Drosophila sechellia (Fruit fly), this protein is Protein alan shepard.